Reading from the N-terminus, the 227-residue chain is Endo-1,4-beta-xylanase 1 (227 aa).

Residues 1–19 form the signal peptide; sequence MVSLKSVLAAATAVSSAIA. Residues 37–225 enclose the GH11 domain; the sequence is QVTPNAEGWH…SSGESDIYVQ (189 aa). The active-site Nucleophile is the glutamate 121. Glutamate 212 (proton donor) is an active-site residue.

It belongs to the glycosyl hydrolase 11 (cellulase G) family.

The catalysed reaction is Endohydrolysis of (1-&gt;4)-beta-D-xylosidic linkages in xylans.. It participates in glycan degradation; xylan degradation. The protein is Endo-1,4-beta-xylanase 1 of Humicola insolens (Soft-rot fungus).